A 488-amino-acid polypeptide reads, in one-letter code: Cobyric acid synthase (488 aa).

The region spanning 255–442 (ALKIAVPVLP…LHGLFGSDAY (188 aa)) is the GATase cobBQ-type domain. The active-site Nucleophile is the Cys337. His434 is a catalytic residue.

It belongs to the CobB/CobQ family. CobQ subfamily.

It functions in the pathway cofactor biosynthesis; adenosylcobalamin biosynthesis. In terms of biological role, catalyzes amidations at positions B, D, E, and G on adenosylcobyrinic A,C-diamide. NH(2) groups are provided by glutamine, and one molecule of ATP is hydrogenolyzed for each amidation. The chain is Cobyric acid synthase from Rhizobium johnstonii (strain DSM 114642 / LMG 32736 / 3841) (Rhizobium leguminosarum bv. viciae).